The primary structure comprises 169 residues: MIKPQLSKKIDSVAVLQEKISTAKTVIVFEYASLPVSSFMQLRRELKKTSCEVKVYPKNIMQRAVTNAKQDDLVTFLKGAKALIISPQELLEPIKTIYNFAKKNKAVKIVSGIVEQKIVSLQEIKTLATLPSKEQMLALLAASMFAPLQHLAIGLNMLVQTKKQENPQQ.

This sequence belongs to the universal ribosomal protein uL10 family. As to quaternary structure, part of the ribosomal stalk of the 50S ribosomal subunit. The N-terminus interacts with L11 and the large rRNA to form the base of the stalk. The C-terminus forms an elongated spine to which L12 dimers bind in a sequential fashion forming a multimeric L10(L12)X complex.

Its function is as follows. Forms part of the ribosomal stalk, playing a central role in the interaction of the ribosome with GTP-bound translation factors. In Onion yellows phytoplasma (strain OY-M), this protein is Large ribosomal subunit protein uL10.